Reading from the N-terminus, the 117-residue chain is Large ribosomal subunit protein uL18 (117 aa).

This sequence belongs to the universal ribosomal protein uL18 family. Part of the 50S ribosomal subunit; part of the 5S rRNA/L5/L18/L25 subcomplex. Contacts the 5S and 23S rRNAs.

This is one of the proteins that bind and probably mediate the attachment of the 5S RNA into the large ribosomal subunit, where it forms part of the central protuberance. The protein is Large ribosomal subunit protein uL18 of Vibrio atlanticus (strain LGP32) (Vibrio splendidus (strain Mel32)).